The chain runs to 162 residues: Lipoprotein signal peptidase (162 aa).

2 helical membrane passes run 56–76 (FLPP…VVWY) and 84–104 (SPLF…NLID). Residues D113 and D139 contribute to the active site. Residues 132-152 (WPIFNVADSCITIGACMIVLF) form a helical membrane-spanning segment.

The protein belongs to the peptidase A8 family.

It is found in the cell inner membrane. It catalyses the reaction Release of signal peptides from bacterial membrane prolipoproteins. Hydrolyzes -Xaa-Yaa-Zaa-|-(S,diacylglyceryl)Cys-, in which Xaa is hydrophobic (preferably Leu), and Yaa (Ala or Ser) and Zaa (Gly or Ala) have small, neutral side chains.. It functions in the pathway protein modification; lipoprotein biosynthesis (signal peptide cleavage). This protein specifically catalyzes the removal of signal peptides from prolipoproteins. This Chlorobaculum tepidum (strain ATCC 49652 / DSM 12025 / NBRC 103806 / TLS) (Chlorobium tepidum) protein is Lipoprotein signal peptidase.